The following is a 309-amino-acid chain: D-alanine--D-alanine ligase (309 aa).

Residues 106 to 305 enclose the ATP-grasp domain; it reads KMLWKAFGLP…FEQLVVKILE (200 aa). Residue 136–191 coordinates ATP; the sequence is VEKLGLPVMVKPSLEGSSVGLTKVKRVEDLKSAVDFALKYDDTVLIEEWLSGAEFT. Residues aspartate 259, glutamate 272, and asparagine 274 each coordinate Mg(2+).

It belongs to the D-alanine--D-alanine ligase family. The cofactor is Mg(2+). Mn(2+) serves as cofactor.

It is found in the cytoplasm. It catalyses the reaction 2 D-alanine + ATP = D-alanyl-D-alanine + ADP + phosphate + H(+). Its pathway is cell wall biogenesis; peptidoglycan biosynthesis. Cell wall formation. The chain is D-alanine--D-alanine ligase from Pasteurella multocida (strain Pm70).